The primary structure comprises 346 residues: UDP-3-O-acylglucosamine N-acyltransferase (346 aa).

H253 (proton acceptor) is an active-site residue.

This sequence belongs to the transferase hexapeptide repeat family. LpxD subfamily. Homotrimer.

The catalysed reaction is a UDP-3-O-[(3R)-3-hydroxyacyl]-alpha-D-glucosamine + a (3R)-hydroxyacyl-[ACP] = a UDP-2-N,3-O-bis[(3R)-3-hydroxyacyl]-alpha-D-glucosamine + holo-[ACP] + H(+). The protein operates within bacterial outer membrane biogenesis; LPS lipid A biosynthesis. In terms of biological role, catalyzes the N-acylation of UDP-3-O-acylglucosamine using 3-hydroxyacyl-ACP as the acyl donor. Is involved in the biosynthesis of lipid A, a phosphorylated glycolipid that anchors the lipopolysaccharide to the outer membrane of the cell. The sequence is that of UDP-3-O-acylglucosamine N-acyltransferase from Rickettsia felis (strain ATCC VR-1525 / URRWXCal2) (Rickettsia azadi).